We begin with the raw amino-acid sequence, 473 residues long: Zinc finger and BTB domain-containing protein 9 (473 aa).

Residues Cys-48–Leu-112 form the BTB domain. Residues Gln-177–Pro-279 form a disordered region. Residues Ser-182–Val-196 show a composition bias toward low complexity. Residues Val-211–Gln-226 are compositionally biased toward acidic residues. Over residues Gly-227–Arg-239 the composition is skewed to polar residues. Lys-286 participates in a covalent cross-link: Glycyl lysine isopeptide (Lys-Gly) (interchain with G-Cter in SUMO1); alternate. Lys-286 is covalently cross-linked (Glycyl lysine isopeptide (Lys-Gly) (interchain with G-Cter in SUMO2); alternate). Glycyl lysine isopeptide (Lys-Gly) (interchain with G-Cter in SUMO2) cross-links involve residues Lys-293 and Lys-307. Residues Lys-293–Thr-376 form a disordered region. Gly residues predominate over residues Ser-355–Gly-364. Lys-382 participates in a covalent cross-link: Glycyl lysine isopeptide (Lys-Gly) (interchain with G-Cter in SUMO2). Residues Phe-411 to His-433 form a C2H2-type 1 zinc finger. The segment at His-438–Cys-460 adopts a C2H2-type 2; atypical zinc-finger fold.

It is found in the nucleus. In terms of biological role, may be involved in transcriptional regulation. This Homo sapiens (Human) protein is Zinc finger and BTB domain-containing protein 9 (ZBTB9).